A 266-amino-acid chain; its full sequence is Oxidoreductase aflX (266 aa).

This sequence belongs to the avfA family.

The protein operates within mycotoxin biosynthesis; aflatoxin biosynthesis. Functionally, oxidoreductase; part of the gene cluster that mediates the biosynthesis of aflatoxins, a group of polyketide-derived furanocoumarins, and part of the most toxic and carcinogenic compounds among the known mycotoxins. The four major aflatoxins produced by A.parasiticus are aflatoxin B1 (AFB1), aflatoxin B2 (AFB2), aflatoxin G1 (AFG1) and aflatoxin G2 (AFG2). Within the aflatoxin pathway, the oxidoreductase aflX seems to be involved in the conversion of versicolorin A (VERA) to demethylsterigmatocystin (DMST), through probable epoxide ring-opening step following versicolorin A oxidation required for the formation of the xanthone ring. The biosynthesis of aflatoxins begins with the norsolorinic acid synthase aflC that combines a hexanoyl starter unit produced by the fatty acid synthase aflA/aflB and 7 malonyl-CoA extender units to synthesize the precursor NOR. The second step is the conversion of NOR to averantin and requires the norsolorinic acid ketoreductase aflD, which catalyzes the dehydration of norsolorinic acid to form (1'S)-averantin. The norsolorinic acid reductases aflE and aflF may also play a role in the conversion of NOR to AVN. The cytochrome P450 monooxygenase aflG then catalyzes the hydroxylation of AVN to 5'hydroxyaverantin (HAVN). The next step is performed by the 5'-hydroxyaverantin dehydrogenase aflH that transforms HAVN to 5'-oxoaverantin (OAVN) which is further converted to averufin (AVF) by aflK that plays a dual role in the pathway, as a 5'-oxoaverantin cyclase that mediates conversion of 5'-oxoaverantin, as well as a versicolorin B synthase in a later step in the pathway. The averufin oxidase aflI catalyzes the conversion of AVF to versiconal hemiacetal acetate (VHA). VHA is then the substrate for the versiconal hemiacetal acetate esterase aflJ to yield versiconal (VAL). Versicolorin B synthase aflK then converts VAL to versicolorin B (VERB) by closing the bisfuran ring of aflatoxin which is required for DNA-binding, thus giving to aflatoxin its activity as a mutagen. Then, the activity of the versicolorin B desaturase aflL leads to versicolorin A (VERA). A branch point starts from VERB since it can also be converted to dihydrodemethylsterigmatocystin (DMDHST), probably also by aflL, VERA being a precursor for aflatoxins B1 and G1, and DMDHST for aflatoxins B2 and G2. Next, the versicolorin reductase aflM and the cytochrome P450 monooxygenase aflN are involved in conversion of VERA to demethylsterigmatocystin (DMST). AflX and aflY seem also involved in this step, through probable aflX-mediated epoxide ring-opening step following versicolorin A oxidation and aflY-mediated Baeyer-Villiger oxidation required for the formation of the xanthone ring. The methyltransferase aflO then leads to the modification of DMST to sterigmatocystin (ST), and of DMDHST to dihydrosterigmatocystin (DHST). Both ST and DHST are then substrates of the O-methyltransferase aflP to yield O-methylsterigmatocystin (OMST) and dihydro-O-methylsterigmatocystin (DHOMST), respectively. Finally OMST is converted to aflatoxins B1 and G1, and DHOMST to aflatoxins B2 and G2, via the action of several enzymes including O-methylsterigmatocystin oxidoreductase aflQ, the cytochrome P450 monooxygenase aflU, but also the NADH-dependent flavin oxidoreductase nadA which is specifically required for the synthesis of AFG1. The chain is Oxidoreductase aflX from Aspergillus parasiticus (strain ATCC 56775 / NRRL 5862 / SRRC 143 / SU-1).